Consider the following 146-residue polypeptide: MYACSKFVSTRSLIRSTSLRSTSQLLSRPLSAVELKRPQMPTDESLSSLAVRRPLTSLIPSRSFQTSAISRDIDTAAKFIGAGAATVGVAGSGAGIGTVFGSLIIGYARNPSLKQQLFSYAILGFALSEAMGLFCLMVAFLILFAM.

The N-terminal 71 residues, 1–71, are a transit peptide targeting the mitochondrion; that stretch reads MYACSKFVST…RSFQTSAISR (71 aa). The chain crosses the membrane as a helical span at residues 87-107; it reads VGVAGSGAGIGTVFGSLIIGY. Lysine 114 bears the N6,N6,N6-trimethyllysine mark. A helical membrane pass occupies residues 122–142; sequence ILGFALSEAMGLFCLMVAFLI.

Belongs to the ATPase C chain family. F-type ATPases have 2 components, CF(1) - the catalytic core - and CF(0) - the membrane proton channel. CF(1) has five subunits: alpha(3), beta(3), gamma(1), delta(1), epsilon(1). CF(0) has three main subunits: a, b and c. Interacts with DNAJC30; interaction is direct. Post-translationally, trimethylated by ATPSCKMT at Lys-114. Methylation is required for proper incorporation of the C subunit into the ATP synthase complex and mitochondrial respiration.

The protein localises to the mitochondrion membrane. In terms of biological role, mitochondrial membrane ATP synthase (F(1)F(0) ATP synthase or Complex V) produces ATP from ADP in the presence of a proton gradient across the membrane which is generated by electron transport complexes of the respiratory chain. F-type ATPases consist of two structural domains, F(1) - containing the extramembraneous catalytic core and F(0) - containing the membrane proton channel, linked together by a central stalk and a peripheral stalk. During catalysis, ATP synthesis in the catalytic domain of F(1) is coupled via a rotary mechanism of the central stalk subunits to proton translocation. Part of the complex F(0) domain. A homomeric c-ring of probably 10 subunits is part of the complex rotary element. This chain is ATP synthase F(0) complex subunit C2, mitochondrial, found in Mus musculus (Mouse).